We begin with the raw amino-acid sequence, 208 residues long: Uracil phosphoribosyltransferase (208 aa).

5-phospho-alpha-D-ribose 1-diphosphate-binding positions include Arg-78, Arg-103, and 130–138 (DPMLATGGS). Uracil is bound by residues Ile-193 and 198–200 (GDA). A 5-phospho-alpha-D-ribose 1-diphosphate-binding site is contributed by Asp-199.

Belongs to the UPRTase family. Mg(2+) is required as a cofactor.

The catalysed reaction is UMP + diphosphate = 5-phospho-alpha-D-ribose 1-diphosphate + uracil. The protein operates within pyrimidine metabolism; UMP biosynthesis via salvage pathway; UMP from uracil: step 1/1. Allosterically activated by GTP. Catalyzes the conversion of uracil and 5-phospho-alpha-D-ribose 1-diphosphate (PRPP) to UMP and diphosphate. This is Uracil phosphoribosyltransferase from Citrobacter koseri (strain ATCC BAA-895 / CDC 4225-83 / SGSC4696).